The primary structure comprises 198 residues: Glycerol-3-phosphate acyltransferase (198 aa).

A run of 6 helical transmembrane segments spans residues 1–21 (MHIL…GFLF), 50–70 (WPAF…VKIA), 77–97 (NLFE…PIWL), 111–131 (MFIA…LIIL), 136–156 (IVSL…FLDI), and 157–177 (GSTN…VIWK).

Belongs to the PlsY family. As to quaternary structure, probably interacts with PlsX.

Its subcellular location is the cell inner membrane. The catalysed reaction is an acyl phosphate + sn-glycerol 3-phosphate = a 1-acyl-sn-glycero-3-phosphate + phosphate. It participates in lipid metabolism; phospholipid metabolism. In terms of biological role, catalyzes the transfer of an acyl group from acyl-phosphate (acyl-PO(4)) to glycerol-3-phosphate (G3P) to form lysophosphatidic acid (LPA). This enzyme utilizes acyl-phosphate as fatty acyl donor, but not acyl-CoA or acyl-ACP. The polypeptide is Glycerol-3-phosphate acyltransferase (Prochlorococcus marinus subsp. pastoris (strain CCMP1986 / NIES-2087 / MED4)).